Here is a 238-residue protein sequence, read N- to C-terminus: GATA transcription factor 7 (238 aa).

Positions T24–G64 are disordered. Basic and acidic residues predominate over residues Q32 to S45. Positions K112–R119 match the Nuclear localization signal motif. Residues Q160–N214 form a GATA-type zinc finger.

The protein belongs to the type IV zinc-finger family. Class A subfamily.

It is found in the nucleus. Its function is as follows. Transcriptional activator that specifically binds 5'-GATA-3' or 5'-GAT-3' motifs within gene promoters. May be involved in the regulation of some light-responsive genes. The chain is GATA transcription factor 7 (GATA7) from Arabidopsis thaliana (Mouse-ear cress).